The chain runs to 62 residues: Protein DsrB (62 aa).

Belongs to the DsrB family.

This Shigella boydii serotype 18 (strain CDC 3083-94 / BS512) protein is Protein DsrB.